The chain runs to 429 residues: Zygotic gap protein knirps (429 aa).

The nuclear receptor DNA-binding region spans 2–78 (NQTCKVCGEP…VGMSKGGSRY (77 aa)). NR C4-type zinc fingers lie at residues 5 to 25 (CKVC…CEGC) and 42 to 66 (CKNE…LRKC). Low complexity predominate over residues 112–126 (SVGGAPSASSPVGSP). Disordered regions lie at residues 112–148 (SVGG…QQQQ), 223–250 (QSVD…SSAR), 338–357 (TSRS…QEVE), and 375–397 (SSSS…AEVK). Polar residues-rich tracts occupy residues 225–237 (VDSV…FSPA) and 338–349 (TSRSSVHSFNDS). The span at 375-393 (SSSSSSHSAAHSPNTTTAH) shows a compositional bias: low complexity.

This sequence belongs to the nuclear hormone receptor family. NR0 subfamily.

Its subcellular location is the nucleus. Its function is as follows. Transcriptional repressor. Binds to multiple sites in the eve stripe 3 enhancer element. Plays an essential role in the segmentation process both by refining the expression patterns of gap genes and by establishing pair-rules stripes of gene expression. In Drosophila melanogaster (Fruit fly), this protein is Zygotic gap protein knirps (kni).